Reading from the N-terminus, the 1018-residue chain is Contactin-1 (1018 aa).

Positions 1–20 are cleaved as a signal peptide; it reads MKMWLLFSLLVIISFKTCLS. Ig-like C2-type domains are found at residues 41 to 131, 137 to 223, 241 to 326, 331 to 407, 413 to 500, and 504 to 601; these read PIFE…ATLS, PFPP…KSVF, PADI…ARIY, PEWV…AELK, PTFE…GTLV, and PTRI…LVVR. Intrachain disulfides connect Cys65-Cys114 and Cys158-Cys211. N-linked (GlcNAc...) asparagine glycosylation is found at Asn208 and Asn258. Residues Cys263 and Cys310 are joined by a disulfide bond. Asn338 carries N-linked (GlcNAc...) asparagine glycosylation. Disulfide bonds link Cys352/Cys391 and Cys436/Cys484. 4 N-linked (GlcNAc...) asparagine glycosylation sites follow: Asn457, Asn473, Asn494, and Asn521. Residues Cys526 and Cys583 are joined by a disulfide bond. The N-linked (GlcNAc...) asparagine glycan is linked to Asn591. Fibronectin type-III domains follow at residues 606-704, 709-806, 811-906, and 907-1000; these read PPGG…TDGA, APSD…SAQD, APTA…APPS, and QPPR…ILSP. Disordered regions lie at residues 698–718 and 891–910; these read KIKT…GGGG and PPSD…QPPR. The GPI-anchor amidated serine moiety is linked to residue Ser999. The propeptide at 1000–1018 is removed in mature form; sequence PCLLGFLLPALGILVYLEF.

This sequence belongs to the immunoglobulin superfamily. Contactin family. As to quaternary structure, monomer. Interacts with CNTNAP1 in cis form. Binds to the carbonic-anhydrase like domain of PTPRZ1. Interacts with NOTCH1 and TNR. Detected in a complex with NRCAM and PTPRB. Interacts with TASOR.

The protein resides in the cell membrane. Functionally, contactins mediate cell surface interactions during nervous system development. Involved in the formation of paranodal axo-glial junctions in myelinated peripheral nerves and in the signaling between axons and myelinating glial cells via its association with CNTNAP1. Participates in oligodendrocytes generation by acting as a ligand of NOTCH1. Its association with NOTCH1 promotes NOTCH1 activation through the released notch intracellular domain (NICD) and subsequent translocation to the nucleus. Interaction with TNR induces a repulsion of neurons and an inhibition of neurite outgrowth. In Bos taurus (Bovine), this protein is Contactin-1 (CNTN1).